The primary structure comprises 273 residues: NADPH-dependent 7-cyano-7-deazaguanine reductase (273 aa).

Residue 81–83 coordinates substrate; the sequence is VES. Position 83–84 (83–84) interacts with NADPH; that stretch reads SK. C179 serves as the catalytic Thioimide intermediate. The active-site Proton donor is D186. Position 218–219 (218–219) interacts with substrate; the sequence is AE. 247-248 is a binding site for NADPH; sequence RG.

This sequence belongs to the GTP cyclohydrolase I family. QueF type 2 subfamily. As to quaternary structure, homodimer.

It is found in the cytoplasm. It carries out the reaction 7-aminomethyl-7-carbaguanine + 2 NADP(+) = 7-cyano-7-deazaguanine + 2 NADPH + 3 H(+). It participates in tRNA modification; tRNA-queuosine biosynthesis. Functionally, catalyzes the NADPH-dependent reduction of 7-cyano-7-deazaguanine (preQ0) to 7-aminomethyl-7-deazaguanine (preQ1). The sequence is that of NADPH-dependent 7-cyano-7-deazaguanine reductase from Rickettsia canadensis (strain McKiel).